The sequence spans 147 residues: Myoglobin (147 aa).

In terms of domain architecture, Globin spans 2–141 (HDAELVLKCW…VIGDIDTYYK (140 aa)). Residue histidine 60 coordinates nitrite. Histidine 60 is a binding site for O2. Histidine 89 contacts heme b.

It belongs to the globin family. As to quaternary structure, monomeric.

Its subcellular location is the cytoplasm. The protein resides in the sarcoplasm. The catalysed reaction is Fe(III)-heme b-[protein] + nitric oxide + H2O = Fe(II)-heme b-[protein] + nitrite + 2 H(+). The enzyme catalyses H2O2 + AH2 = A + 2 H2O. In terms of biological role, monomeric heme protein which primary function is to store oxygen and facilitate its diffusion within muscle tissues. Reversibly binds oxygen through a pentacoordinated heme iron and enables its timely and efficient release as needed during periods of heightened demand. Depending on the oxidative conditions of tissues and cells, and in addition to its ability to bind oxygen, it also has a nitrite reductase activity whereby it regulates the production of bioactive nitric oxide. Under stress conditions, like hypoxia and anoxia, it also protects cells against reactive oxygen species thanks to its pseudoperoxidase activity. The polypeptide is Myoglobin (mb) (Cyprinus carpio (Common carp)).